The following is a 1407-amino-acid chain: JmjC domain-containing histone demethylation protein 1 (1407 aa).

2 disordered regions span residues 1–86 (MISA…SSTI) and 98–151 (PTFT…NAFS). Composition is skewed to basic and acidic residues over residues 55–67 (DHVRSTPTDKRPS) and 125–140 (PVERPAKRPRSERDES). The span at 141–150 (SYTQHRSNAF) shows a compositional bias: polar residues. Residues 323-382 (QASCATCNLVRIPVDNEDQDVTWISCDGCKRWFHIVCAGFKNDRETRTVDKFICKTCRPI) form a PHD-type zinc finger. One can recognise a JmjC domain in the interval 577–735 (VSQSKLGRLI…MQIKIAKIEK (159 aa)). Threonine 628 is a binding site for substrate. Fe cation is bound by residues histidine 631 and aspartate 633. Lysine 648 is a substrate binding site. Histidine 703 contributes to the Fe cation binding site. Disordered regions lie at residues 893-987 (KLSL…LGPK), 1004-1027 (KEENNGASGSQMTVSTSSLGHHTP), 1122-1183 (IKAQ…QDSV), and 1252-1389 (DEMD…SLRL). Composition is skewed to basic and acidic residues over residues 896–914 (LAEKRPAGRPSRRSERNAD) and 928–938 (LSERPAVDIQK). Residues 1008–1027 (NGASGSQMTVSTSSLGHHTP) are compositionally biased toward polar residues. Residues 1254–1264 (MDIHDQVDAGG) are compositionally biased toward basic and acidic residues. Positions 1273-1284 (PSSGSRQSSRQP) are enriched in low complexity. The segment covering 1285-1296 (RQVERYMPEVHF) has biased composition (basic and acidic residues). The span at 1297-1349 (AKTAKSTTTTPQTTRRSSFGSSGRKTTPGLSSGSKKSGSRPSSSHGKKSLSPS) shows a compositional bias: low complexity.

The protein belongs to the JHDM1 histone demethylase family. The cofactor is Fe(2+).

Its subcellular location is the nucleus. It catalyses the reaction N(6),N(6)-dimethyl-L-lysyl(36)-[histone H3] + 2 2-oxoglutarate + 2 O2 = L-lysyl(36)-[histone H3] + 2 formaldehyde + 2 succinate + 2 CO2. Histone demethylase that specifically demethylates 'Lys-36' of histone H3, thereby playing a central role in histone code. The polypeptide is JmjC domain-containing histone demethylation protein 1 (jhd1) (Emericella nidulans (strain FGSC A4 / ATCC 38163 / CBS 112.46 / NRRL 194 / M139) (Aspergillus nidulans)).